The sequence spans 259 residues: Haloacid dehalogenase-like hydrolase domain-containing protein 2 (259 aa).

The Mg(2+) site is built by Asp13 and Ser15. Residues 13-15 (DLS) and 46-47 (TN) each bind substrate. A coiled-coil region spans residues 47–71 (NTTKESKQDLLERLRKLEFDISEDE). An N6-succinyllysine modification is found at Lys50. Residue Lys179 coordinates substrate. Residue Asp204 coordinates Mg(2+).

Belongs to the HAD-like hydrolase superfamily. Mg(2+) is required as a cofactor.

This chain is Haloacid dehalogenase-like hydrolase domain-containing protein 2 (HDHD2), found in Pongo abelii (Sumatran orangutan).